The primary structure comprises 321 residues: Lipoyl synthase (321 aa).

[4Fe-4S] cluster contacts are provided by Cys-68, Cys-73, Cys-79, Cys-94, Cys-98, Cys-101, and Ser-308. Positions Phe-80 to Thr-297 constitute a Radical SAM core domain.

Belongs to the radical SAM superfamily. Lipoyl synthase family. Requires [4Fe-4S] cluster as cofactor.

It localises to the cytoplasm. The catalysed reaction is [[Fe-S] cluster scaffold protein carrying a second [4Fe-4S](2+) cluster] + N(6)-octanoyl-L-lysyl-[protein] + 2 oxidized [2Fe-2S]-[ferredoxin] + 2 S-adenosyl-L-methionine + 4 H(+) = [[Fe-S] cluster scaffold protein] + N(6)-[(R)-dihydrolipoyl]-L-lysyl-[protein] + 4 Fe(3+) + 2 hydrogen sulfide + 2 5'-deoxyadenosine + 2 L-methionine + 2 reduced [2Fe-2S]-[ferredoxin]. The protein operates within protein modification; protein lipoylation via endogenous pathway; protein N(6)-(lipoyl)lysine from octanoyl-[acyl-carrier-protein]: step 2/2. Catalyzes the radical-mediated insertion of two sulfur atoms into the C-6 and C-8 positions of the octanoyl moiety bound to the lipoyl domains of lipoate-dependent enzymes, thereby converting the octanoylated domains into lipoylated derivatives. This Sodalis glossinidius (strain morsitans) protein is Lipoyl synthase.